A 239-amino-acid polypeptide reads, in one-letter code: Ribonuclease PH (239 aa).

Phosphate is bound by residues Arg86 and 124 to 126 (GTR).

The protein belongs to the RNase PH family. Homohexameric ring arranged as a trimer of dimers.

The catalysed reaction is tRNA(n+1) + phosphate = tRNA(n) + a ribonucleoside 5'-diphosphate. In terms of biological role, phosphorolytic 3'-5' exoribonuclease that plays an important role in tRNA 3'-end maturation. Removes nucleotide residues following the 3'-CCA terminus of tRNAs; can also add nucleotides to the ends of RNA molecules by using nucleoside diphosphates as substrates, but this may not be physiologically important. Probably plays a role in initiation of 16S rRNA degradation (leading to ribosome degradation) during starvation. This is Ribonuclease PH from Rickettsia bellii (strain RML369-C).